A 216-amino-acid chain; its full sequence is Uracil-DNA glycosylase (216 aa).

Asp60 serves as the catalytic Proton acceptor.

It belongs to the uracil-DNA glycosylase (UDG) superfamily. UNG family.

It is found in the cytoplasm. The catalysed reaction is Hydrolyzes single-stranded DNA or mismatched double-stranded DNA and polynucleotides, releasing free uracil.. Its function is as follows. Excises uracil residues from the DNA which can arise as a result of misincorporation of dUMP residues by DNA polymerase or due to deamination of cytosine. In Psychromonas ingrahamii (strain DSM 17664 / CCUG 51855 / 37), this protein is Uracil-DNA glycosylase.